A 777-amino-acid polypeptide reads, in one-letter code: Acyl-CoA dehydrogenase family member 11 (777 aa).

FAD-binding positions include 501–511 (FCMTEPDVASS), 509–511 (ASS), 535–537 (WSS), and S537. Residue S511 coordinates substrate. Substrate is bound at residue 626–629 (GPGR). FAD contacts are provided by residues R654, Q724, and 724-728 (QVCGG). Substrate is bound at residue G752. FAD is bound by residues 753–755 (PDE) and E755.

This sequence belongs to the acyl-CoA dehydrogenase family. In terms of assembly, homodimer. The cofactor is FAD.

It localises to the peroxisome. Its subcellular location is the mitochondrion membrane. The catalysed reaction is a 2,3-saturated acyl-CoA + oxidized [electron-transfer flavoprotein] + H(+) = a (2E)-enoyl-CoA + reduced [electron-transfer flavoprotein]. The enzyme catalyses docosanoyl-CoA + oxidized [electron-transfer flavoprotein] + H(+) = (2E)-docosenoyl-CoA + reduced [electron-transfer flavoprotein]. It catalyses the reaction tetracosanoyl-CoA + oxidized [electron-transfer flavoprotein] + H(+) = (2E)-tetracosenoyl-CoA + reduced [electron-transfer flavoprotein]. It carries out the reaction eicosanoyl-CoA + oxidized [electron-transfer flavoprotein] + H(+) = (2E)-eicosenoyl-CoA + reduced [electron-transfer flavoprotein]. The catalysed reaction is hexacosanoyl-CoA + oxidized [electron-transfer flavoprotein] + H(+) = (2E)-hexacosenoyl-CoA + reduced [electron-transfer flavoprotein]. The enzyme catalyses tricosanoyl-CoA + oxidized [electron-transfer flavoprotein] + H(+) = (2E)-tricosenoyl-CoA + reduced [electron-transfer flavoprotein]. It functions in the pathway lipid metabolism; fatty acid beta-oxidation. Its function is as follows. Acyl-CoA dehydrogenase, that exhibits maximal activity towards saturated C22-CoA. Probably participates in beta-oxydation and energy production but could also play a role in the metabolism of specific fatty acids to control fatty acids composition of cellular lipids in brain. The polypeptide is Acyl-CoA dehydrogenase family member 11 (ACAD11) (Gallus gallus (Chicken)).